The chain runs to 92 residues: Small ribosomal subunit protein uS19c (92 aa).

This sequence belongs to the universal ribosomal protein uS19 family.

It is found in the plastid. It localises to the chloroplast. In terms of biological role, protein S19 forms a complex with S13 that binds strongly to the 16S ribosomal RNA. The polypeptide is Small ribosomal subunit protein uS19c (Huperzia lucidula (Shining clubmoss)).